The sequence spans 134 residues: MDYAFLGIVAAVLLGSITSLWTVRVQATHRLSLDSLWVLVQWYLTMLLGFAMIYMILQVNGHAVFTPSPNSASKDRLSLLEDSLYLSGMTLLSVGYGDVTPIGVGRWIAIAEALVGYIMPAVIVTRTVFDWDHR.

The chain is Protein LctB (lctB) from Bacillus caldotenax.